Consider the following 375-residue polypeptide: Succinyl-diaminopimelate desuccinylase (375 aa).

Histidine 66 serves as a coordination point for Zn(2+). The active site involves aspartate 68. Aspartate 99 is a binding site for Zn(2+). Glutamate 133 serves as the catalytic Proton acceptor. Residues glutamate 134, glutamate 162, and histidine 348 each contribute to the Zn(2+) site.

Belongs to the peptidase M20A family. DapE subfamily. As to quaternary structure, homodimer. Zn(2+) serves as cofactor. It depends on Co(2+) as a cofactor.

It catalyses the reaction N-succinyl-(2S,6S)-2,6-diaminopimelate + H2O = (2S,6S)-2,6-diaminopimelate + succinate. It participates in amino-acid biosynthesis; L-lysine biosynthesis via DAP pathway; LL-2,6-diaminopimelate from (S)-tetrahydrodipicolinate (succinylase route): step 3/3. Functionally, catalyzes the hydrolysis of N-succinyl-L,L-diaminopimelic acid (SDAP), forming succinate and LL-2,6-diaminopimelate (DAP), an intermediate involved in the bacterial biosynthesis of lysine and meso-diaminopimelic acid, an essential component of bacterial cell walls. The protein is Succinyl-diaminopimelate desuccinylase of Yersinia pestis bv. Antiqua (strain Antiqua).